The following is a 274-amino-acid chain: MNSMNILNKVKNVKSYTRLVRQGFLSQQRNHSVSVNEVDHFNELAKTWWDWDGGSRLLHLMNSTRLDFMTEVFRERNCFSGKKILDIGCGGGILSESMARLGASVTAVDASPMAIEVAKKHASLDPVLNGRLEYIHGSVEGSQLPTTFDVVTCMEVLEHVEQPRDFLFSLMEKVKPNGRLVLSTISRTLLARLLTITLAEHVLRIVPVGTHTFEKFIRADELSNFLKEQNWIINDIRGVCYNPLKQQWTLDKPGSSGLGLSCNYFLSAQKPMSA.

The transit peptide at 1 to 30 (MNSMNILNKVKNVKSYTRLVRQGFLSQQRN) directs the protein to the mitochondrion. Arginine 65, glycine 88, aspartate 109, and methionine 154 together coordinate S-adenosyl-L-methionine. Mg(2+)-binding residues include glutamate 155, glutamate 158, and histidine 159.

It belongs to the class I-like SAM-binding methyltransferase superfamily. UbiG/COQ3 family. As to quaternary structure, component of a multi-subunit COQ enzyme complex, composed of at least coq3, coq4, coq5, coq6, coq7 and coq9. It depends on Mg(2+) as a cofactor.

Its subcellular location is the mitochondrion inner membrane. It carries out the reaction 3,4-dihydroxy-5-(all-trans-decaprenyl)benzoate + S-adenosyl-L-methionine = 4-hydroxy-3-methoxy-5-(all-trans-decaprenyl)benzoate + S-adenosyl-L-homocysteine + H(+). The catalysed reaction is a 3-demethylubiquinone + S-adenosyl-L-methionine = a ubiquinone + S-adenosyl-L-homocysteine. It catalyses the reaction 3-demethylubiquinol-10 + S-adenosyl-L-methionine = ubiquinol-10 + S-adenosyl-L-homocysteine + H(+). Its pathway is cofactor biosynthesis; ubiquinone biosynthesis. In terms of biological role, O-methyltransferase required for two non-consecutive steps during ubiquinone biosynthesis. Catalyzes the 2 O-methylation of 3,4-dihydroxy-5-(all-trans-decaprenyl)benzoic acid into 4-hydroxy-3-methoxy-5-(all-trans-decaprenyl)benzoic acid. Also catalyzes the last step of ubiquinone biosynthesis by mediating methylation of 3-demethylubiquinone into ubiquinone. Also able to mediate the methylation of 3-demethylubiquinol-10 into ubiquinol-10. In Schizosaccharomyces pombe (strain 972 / ATCC 24843) (Fission yeast), this protein is Ubiquinone biosynthesis O-methyltransferase, mitochondrial.